The chain runs to 370 residues: MPHQQILMLFGLLPVATNISTWWNFGSMLIACSTLQVLTGFFLAVHYTANINLAFSSIIHITRDVPYGWLMQNLHAIGASMFFICIYIHIARGLYYGSYLNKETWLSGTTLLIMLMATAFFGYVLPWGQMSFWAATVITNLLTAIPYLGTTMTTWLWGGFAINDPTLTRFFALHFILPFGIISMSSLHVMLLHEEGSSNPLGTNSDIDKIPFHPYHTYKDLLMLAAMTTLLLLIVSFSPDIFNDPDNFSKANPLVTPQRIKPEWYFLFAYGILRSIPNKLGGALALTMSIVILLTVPFTHTSKMRSMMFRPFMQMTFWLFAATFMVITWTATKPVEPPFTLIGQAASMIYFLFFISNPIMGWLENKIMKM.

A run of 4 helical transmembrane segments spans residues Phe25–Val45, Trp69–Ile90, Trp105–Leu125, and Phe170–Met190. Heme b contacts are provided by His75 and His89. Positions 174 and 188 each coordinate heme b. A ubiquinone is bound at residue His193. Transmembrane regions (helical) follow at residues Tyr218 to Ser238, Leu280 to His300, Phe312 to Thr332, and Phe339 to Pro358.

This sequence belongs to the cytochrome b family. The cytochrome bc1 complex contains 3 respiratory subunits (MT-CYB, CYC1 and UQCRFS1), 2 core proteins (UQCRC1 and UQCRC2) and probably 6 low-molecular weight proteins. Heme b is required as a cofactor.

It localises to the mitochondrion inner membrane. Functionally, component of the ubiquinol-cytochrome c reductase complex (complex III or cytochrome b-c1 complex) that is part of the mitochondrial respiratory chain. The b-c1 complex mediates electron transfer from ubiquinol to cytochrome c. Contributes to the generation of a proton gradient across the mitochondrial membrane that is then used for ATP synthesis. This Eunectes notaeus (Yellow anaconda) protein is Cytochrome b (MT-CYB).